Here is a 268-residue protein sequence, read N- to C-terminus: Nickel import ATP-binding protein NikE (268 aa).

In terms of domain architecture, ABC transporter spans 4–252 (LNISGLSHHY…SSDAGRVLQN (249 aa)). 45–52 (GRSGCGKS) is a binding site for ATP.

It belongs to the ABC transporter superfamily. Nickel importer (TC 3.A.1.5.3) family. As to quaternary structure, the complex is composed of two ATP-binding proteins (NikD and NikE), two transmembrane proteins (NikB and NikC) and a solute-binding protein (NikA).

It localises to the cell inner membrane. It catalyses the reaction Ni(2+)(out) + ATP + H2O = Ni(2+)(in) + ADP + phosphate + H(+). In terms of biological role, part of the ABC transporter complex NikABCDE involved in nickel import. Responsible for energy coupling to the transport system. This Escherichia coli (strain K12) protein is Nickel import ATP-binding protein NikE.